We begin with the raw amino-acid sequence, 87 residues long: Kappa-4-bungarotoxin (87 aa).

An N-terminal signal peptide occupies residues 1 to 21 (MKTLLLTLVVVTIVCLDLGYT). 5 cysteine pairs are disulfide-bonded: C24/C42, C35/C63, C48/C52, C67/C79, and C80/C85.

It belongs to the three-finger toxin family. Long-chain subfamily. Kappa-neurotoxin sub-subfamily. Homo- and heterodimer; non-covalently linked. In terms of tissue distribution, expressed by the venom gland.

It is found in the secreted. Its function is as follows. Postsynaptic neurotoxin that binds and inhibits neuronal nicotinic acetylcholine receptors (nAChR) with high affinity (IC(50)&lt;100 nM). Is a selective, and slowly reversible antagonist of alpha-3/CHRNA3-containing and some alpha-4/CHRNA4-containing AChRs. The chain is Kappa-4-bungarotoxin from Bungarus multicinctus (Many-banded krait).